Consider the following 122-residue polypeptide: Large ribosomal subunit protein uL18 (122 aa).

This sequence belongs to the universal ribosomal protein uL18 family. As to quaternary structure, part of the 50S ribosomal subunit; part of the 5S rRNA/L5/L18/L25 subcomplex. Contacts the 5S and 23S rRNAs.

In terms of biological role, this is one of the proteins that bind and probably mediate the attachment of the 5S RNA into the large ribosomal subunit, where it forms part of the central protuberance. This chain is Large ribosomal subunit protein uL18, found in Lachnospira eligens (strain ATCC 27750 / DSM 3376 / VPI C15-48 / C15-B4) (Eubacterium eligens).